The sequence spans 874 residues: Alanine--tRNA ligase (874 aa).

Zn(2+) contacts are provided by His563, His567, Cys665, and His669.

Belongs to the class-II aminoacyl-tRNA synthetase family. The cofactor is Zn(2+).

The protein localises to the cytoplasm. It catalyses the reaction tRNA(Ala) + L-alanine + ATP = L-alanyl-tRNA(Ala) + AMP + diphosphate. Its function is as follows. Catalyzes the attachment of alanine to tRNA(Ala) in a two-step reaction: alanine is first activated by ATP to form Ala-AMP and then transferred to the acceptor end of tRNA(Ala). Also edits incorrectly charged Ser-tRNA(Ala) and Gly-tRNA(Ala) via its editing domain. The polypeptide is Alanine--tRNA ligase (Haemophilus influenzae (strain ATCC 51907 / DSM 11121 / KW20 / Rd)).